Consider the following 103-residue polypeptide: Histone H4 (103 aa).

Residues 1–14 show a composition bias toward gly residues; that stretch reads MSGRGKGGKGLGKG. Residues 1–20 are disordered; it reads MSGRGKGGKGLGKGGAKRHR. At serine 2 the chain carries N-acetylserine. Lysine 17 bears the N6-acetyllysine mark. The DNA-binding element occupies 17–21; that stretch reads KRHRK. An N6-methyllysine modification is found at lysine 21.

The protein belongs to the histone H4 family. As to quaternary structure, the nucleosome is a histone octamer containing two molecules each of H2A, H2B, H3 and H4 assembled in one H3-H4 heterotetramer and two H2A-H2B heterodimers. The octamer wraps approximately 147 bp of DNA.

It is found in the nucleus. Its subcellular location is the chromosome. Its function is as follows. Core component of nucleosome. Nucleosomes wrap and compact DNA into chromatin, limiting DNA accessibility to the cellular machineries which require DNA as a template. Histones thereby play a central role in transcription regulation, DNA repair, DNA replication and chromosomal stability. DNA accessibility is regulated via a complex set of post-translational modifications of histones, also called histone code, and nucleosome remodeling. The protein is Histone H4 of Pyrenomonas salina.